The following is a 142-amino-acid chain: Large ribosomal subunit protein uL13 (142 aa).

It belongs to the universal ribosomal protein uL13 family. Part of the 50S ribosomal subunit.

This protein is one of the early assembly proteins of the 50S ribosomal subunit, although it is not seen to bind rRNA by itself. It is important during the early stages of 50S assembly. This is Large ribosomal subunit protein uL13 from Thioalkalivibrio sulfidiphilus (strain HL-EbGR7).